Here is a 64-residue protein sequence, read N- to C-terminus: Long neurotoxin MS5 (64 aa).

Cystine bridges form between cysteine 3–cysteine 24, cysteine 6–cysteine 11, cysteine 17–cysteine 41, cysteine 45–cysteine 57, and cysteine 58–cysteine 63.

Belongs to the three-finger toxin family. Ancestral subfamily. As to expression, expressed by the venom gland.

It localises to the secreted. Functionally, produces peripheral paralysis by blocking neuromuscular transmission at the postsynaptic site. Very weak inhibitor of the endogenous nicotinic acetylcholine receptors (nAChR) in the human rhabdomyosarcoma TE 671 cell line. This neurotoxin is lethal to zebrafish by injection at the back of the dorsolateral region, but is not toxic to mice by intraperitoneal injection. This is Long neurotoxin MS5 from Micrurus surinamensis (Surinam coral snake).